The sequence spans 124 residues: Small ribosomal subunit protein uS12 (124 aa).

D89 is subject to 3-methylthioaspartic acid.

It belongs to the universal ribosomal protein uS12 family. In terms of assembly, part of the 30S ribosomal subunit. Contacts proteins S8 and S17. May interact with IF1 in the 30S initiation complex.

Its function is as follows. With S4 and S5 plays an important role in translational accuracy. In terms of biological role, interacts with and stabilizes bases of the 16S rRNA that are involved in tRNA selection in the A site and with the mRNA backbone. Located at the interface of the 30S and 50S subunits, it traverses the body of the 30S subunit contacting proteins on the other side and probably holding the rRNA structure together. The combined cluster of proteins S8, S12 and S17 appears to hold together the shoulder and platform of the 30S subunit. This is Small ribosomal subunit protein uS12 from Shewanella baltica (strain OS223).